The primary structure comprises 250 residues: 1-(5-phosphoribosyl)-5-[(5-phosphoribosylamino)methylideneamino] imidazole-4-carboxamide isomerase (250 aa).

The active-site Proton acceptor is D12. D133 serves as the catalytic Proton donor.

It belongs to the HisA/HisF family.

It is found in the cytoplasm. The catalysed reaction is 1-(5-phospho-beta-D-ribosyl)-5-[(5-phospho-beta-D-ribosylamino)methylideneamino]imidazole-4-carboxamide = 5-[(5-phospho-1-deoxy-D-ribulos-1-ylimino)methylamino]-1-(5-phospho-beta-D-ribosyl)imidazole-4-carboxamide. It functions in the pathway amino-acid biosynthesis; L-histidine biosynthesis; L-histidine from 5-phospho-alpha-D-ribose 1-diphosphate: step 4/9. The polypeptide is 1-(5-phosphoribosyl)-5-[(5-phosphoribosylamino)methylideneamino] imidazole-4-carboxamide isomerase (Zymomonas mobilis subsp. mobilis (strain ATCC 31821 / ZM4 / CP4)).